We begin with the raw amino-acid sequence, 229 residues long: NAD(P)H-quinone oxidoreductase subunit K, chloroplastic (229 aa).

4 residues coordinate [4Fe-4S] cluster: cysteine 43, cysteine 44, cysteine 108, and cysteine 139.

Belongs to the complex I 20 kDa subunit family. In terms of assembly, NDH is composed of at least 16 different subunits, 5 of which are encoded in the nucleus. [4Fe-4S] cluster serves as cofactor.

The protein resides in the plastid. It is found in the chloroplast thylakoid membrane. It carries out the reaction a plastoquinone + NADH + (n+1) H(+)(in) = a plastoquinol + NAD(+) + n H(+)(out). The enzyme catalyses a plastoquinone + NADPH + (n+1) H(+)(in) = a plastoquinol + NADP(+) + n H(+)(out). NDH shuttles electrons from NAD(P)H:plastoquinone, via FMN and iron-sulfur (Fe-S) centers, to quinones in the photosynthetic chain and possibly in a chloroplast respiratory chain. The immediate electron acceptor for the enzyme in this species is believed to be plastoquinone. Couples the redox reaction to proton translocation, and thus conserves the redox energy in a proton gradient. The polypeptide is NAD(P)H-quinone oxidoreductase subunit K, chloroplastic (Coffea arabica (Arabian coffee)).